The sequence spans 108 residues: Nitrogenase-stabilizing/protective protein NifW (108 aa).

This sequence belongs to the NifW family. Homotrimer; associates with NifD.

Its function is as follows. May protect the nitrogenase Fe-Mo protein from oxidative damage. This is Nitrogenase-stabilizing/protective protein NifW from Zymomonas mobilis subsp. mobilis (strain ATCC 31821 / ZM4 / CP4).